The following is a 78-amino-acid chain: Major outer membrane lipoprotein Lpp (78 aa).

The first 20 residues, 1–20 (MNRTKLVLGAVILGSTLLAG), serve as a signal peptide directing secretion. The N-palmitoyl cysteine moiety is linked to residue Cys-21. Cys-21 is lipidated: S-diacylglycerol cysteine. A coiled-coil region spans residues 22 to 75 (SSNAKIDQLSTDVQTLNAKVDQLSNDVTAIRSDVQAAKDDAARANQRLDNQAHS). 2 consecutive repeats follow at residues 24-34 (NAKIDQLSTDV) and 38-48 (NAKVDQLSNDV). Residue Lys-78 is modified to N6-murein peptidoglycan lysine.

It belongs to the Lpp family. As to quaternary structure, homotrimer.

Its subcellular location is the cell outer membrane. The protein localises to the secreted. The protein resides in the cell wall. A highly abundant outer membrane lipoprotein that controls the distance between the inner and outer membranes. The only protein known to be covalently linked to the peptidoglycan network (PGN). Also non-covalently binds the PGN. The link between the cell outer membrane and PGN contributes to maintenance of the structural and functional integrity of the cell envelope, and maintains the correct distance between the PGN and the outer membrane. In Erwinia amylovora (Fire blight bacteria), this protein is Major outer membrane lipoprotein Lpp.